The following is a 499-amino-acid chain: Trichoplein keratin filament-binding protein (499 aa).

A coiled-coil region spans residues 12–38 (SRVRTLEQQLVRQREQEARLRRQWEQH). Disordered regions lie at residues 46–78 (DVRSSKQAQWSSRQSFHRSMSAFQRDRMREEKQ) and 169–209 (VQQQ…EEEN). Residues 50–67 (SKQAQWSSRQSFHRSMSA) are compositionally biased toward polar residues. 2 stretches are compositionally biased toward basic and acidic residues: residues 69 to 78 (QRDRMREEKQ) and 172 to 209 (QEKKQADERTQEEKQRFENEYERTRQEALERMRKEEEN). Coiled-coil stretches lie at residues 71-133 (DRMR…ERRK), 168-306 (QVQQ…ALLE), and 359-484 (WEKR…MIRQ). Residues 74–499 (REEKQRKLEE…IHSRPRSAWT (426 aa)) form an interaction with keratin proteins region. The trichohyalin/plectin homology domain stretch occupies residues 260–426 (KMMEESRRKT…RLTLRLEKEQ (167 aa)).

Belongs to the TCHP family.

The protein resides in the cytoplasm. The protein localises to the cytoskeleton. It localises to the microtubule organizing center. It is found in the centrosome. Its function is as follows. May act as a 'capping' or 'branching' protein for keratin filaments in the cell periphery. May regulate K8/K18 filament and desmosome organization mainly at the apical or peripheral regions of simple epithelial cells. The protein is Trichoplein keratin filament-binding protein of Danio rerio (Zebrafish).